Here is a 387-residue protein sequence, read N- to C-terminus: 1-deoxy-D-xylulose 5-phosphate reductoisomerase (387 aa).

Residues T10, G11, S12, I13, G36, N38, and N122 each contribute to the NADPH site. K123 contributes to the 1-deoxy-D-xylulose 5-phosphate binding site. E124 serves as a coordination point for NADPH. D148 contributes to the Mn(2+) binding site. Residues S149, E150, S174, and H197 each coordinate 1-deoxy-D-xylulose 5-phosphate. E150 contacts Mn(2+). G203 contacts NADPH. Residues S210, N215, K216, and E219 each contribute to the 1-deoxy-D-xylulose 5-phosphate site. E219 provides a ligand contact to Mn(2+).

The protein belongs to the DXR family. Requires Mg(2+) as cofactor. The cofactor is Mn(2+).

It catalyses the reaction 2-C-methyl-D-erythritol 4-phosphate + NADP(+) = 1-deoxy-D-xylulose 5-phosphate + NADPH + H(+). It functions in the pathway isoprenoid biosynthesis; isopentenyl diphosphate biosynthesis via DXP pathway; isopentenyl diphosphate from 1-deoxy-D-xylulose 5-phosphate: step 1/6. In terms of biological role, catalyzes the NADPH-dependent rearrangement and reduction of 1-deoxy-D-xylulose-5-phosphate (DXP) to 2-C-methyl-D-erythritol 4-phosphate (MEP). The sequence is that of 1-deoxy-D-xylulose 5-phosphate reductoisomerase from Chloroherpeton thalassium (strain ATCC 35110 / GB-78).